A 225-amino-acid chain; its full sequence is Uracil-DNA glycosylase (225 aa).

Residue aspartate 67 is the Proton acceptor of the active site.

Belongs to the uracil-DNA glycosylase (UDG) superfamily. UNG family.

It is found in the cytoplasm. The catalysed reaction is Hydrolyzes single-stranded DNA or mismatched double-stranded DNA and polynucleotides, releasing free uracil.. Its function is as follows. Excises uracil residues from the DNA which can arise as a result of misincorporation of dUMP residues by DNA polymerase or due to deamination of cytosine. The sequence is that of Uracil-DNA glycosylase from Coxiella burnetii (strain Dugway 5J108-111).